The sequence spans 519 residues: Glutamate--cysteine ligase (519 aa).

The protein belongs to the glutamate--cysteine ligase type 1 family. Type 1 subfamily.

The enzyme catalyses L-cysteine + L-glutamate + ATP = gamma-L-glutamyl-L-cysteine + ADP + phosphate + H(+). The protein operates within sulfur metabolism; glutathione biosynthesis; glutathione from L-cysteine and L-glutamate: step 1/2. The chain is Glutamate--cysteine ligase from Photorhabdus laumondii subsp. laumondii (strain DSM 15139 / CIP 105565 / TT01) (Photorhabdus luminescens subsp. laumondii).